The chain runs to 175 residues: Cytidylate kinase (175 aa).

An ATP-binding site is contributed by 7 to 15 (GLPGSGTTT).

It belongs to the cytidylate kinase family. Type 2 subfamily.

The protein localises to the cytoplasm. It carries out the reaction CMP + ATP = CDP + ADP. It catalyses the reaction dCMP + ATP = dCDP + ADP. In Methanococcoides burtonii (strain DSM 6242 / NBRC 107633 / OCM 468 / ACE-M), this protein is Cytidylate kinase.